We begin with the raw amino-acid sequence, 38 residues long: Large ribosomal subunit protein bL36 (38 aa).

This sequence belongs to the bacterial ribosomal protein bL36 family.

The polypeptide is Large ribosomal subunit protein bL36 (Lactobacillus acidophilus (strain ATCC 700396 / NCK56 / N2 / NCFM)).